We begin with the raw amino-acid sequence, 117 residues long: Protein Aeq5-like2 (117 aa).

At 1-36 (MLVNARAIRQSIGIVVAQCRRDLESNRTLDYRTRMR) the chain is on the cytoplasmic side. A helical membrane pass occupies residues 37 to 56 (TSLILVAMVMVSVLLPYTYG). At 57-117 (SSCDSFCTEQ…RFTKEPTEES (61 aa)) the chain is on the extracellular side. 4 disulfide bridges follow: C59–C94, C63–C90, C70–C83, and C74–C80.

The mature peptide may be cleaved at a dibasic residue site and be shorter than the sequence shown (possibly residues 1-94). Expressed in endodermal ganglion neurons, apparently bipolar and following mesentery folds (observed in both planulae and primary polyps). It not expressed in nematocytes.

The protein localises to the membrane. In Nematostella vectensis (Starlet sea anemone), this protein is Protein Aeq5-like2.